Consider the following 746-residue polypeptide: Zinc finger protein 366 (746 aa).

The disordered stretch occupies residues 1–64; it reads MQKAMKMVKD…FRYEPSPGDL (64 aa). 11 C2H2-type zinc fingers span residues 250–272, 278–300, 306–328, 334–356, 362–384, 390–412, 418–440, 446–468, 474–496, 502–524, and 530–553; these read WQCPTCEKSYTSKYNLVTHILGH, HACSRCGKLFKQLSHLHTHMLTH, HKCQVCHKAFTQTSHLKRHMMQH, HNCRVCSRGFAYPSELKAHEAKH, NICVECGLDFPTLAQLKRHLTTH, YNCSECDKTFQYPSQLQNHMMKH, YICSECGMEFVQPHHLKQHSLTH, HKCGICGREFTLLANMKRHVLIH, YQCHLCYKSFVQKQTLKAHMIVH, FKCKLCGKEFNRMHNLMGHLHLH, and FKCLYCPSKFTLKGNLTRHMKVKH. Residues 452-746 form an interaction with NRIP1 region; sequence GREFTLLANM…MEKQAVLLGI (295 aa). The short motif at 587-591 is the PXDLS element; sequence PFDLS. The tract at residues 587–689 is disordered; that stretch reads PFDLSQKRSA…DHEGSDIDCE (103 aa). A compositionally biased stretch (acidic residues) spans 613-627; sequence CQEEEEEAGEEDNCY. Basic and acidic residues predominate over residues 675–689; sequence EDRSEDHEGSDIDCE.

Interacts with ESR1 and NRIP1. Interacts (via PXDLS motif) with CTBP1. In terms of tissue distribution, expressed in immature and mature dendritic cells (DCs).

Its subcellular location is the nucleus. Functionally, has transcriptional repression activity. Acts as a corepressor of ESR1; the function seems to involve CTBP1 and histone deacetylases. This Mus musculus (Mouse) protein is Zinc finger protein 366.